Here is a 541-residue protein sequence, read N- to C-terminus: Chaperonin GroEL 1 (541 aa).

ATP contacts are provided by residues 29–32, 86–90, Gly413, 479–481, and Asp495; these read TLGP, DGTTT, and NAA.

It belongs to the chaperonin (HSP60) family. Forms a cylinder of 14 subunits composed of two heptameric rings stacked back-to-back. Interacts with the co-chaperonin GroES.

The protein localises to the cytoplasm. The catalysed reaction is ATP + H2O + a folded polypeptide = ADP + phosphate + an unfolded polypeptide.. In terms of biological role, together with its co-chaperonin GroES, plays an essential role in assisting protein folding. The GroEL-GroES system forms a nano-cage that allows encapsulation of the non-native substrate proteins and provides a physical environment optimized to promote and accelerate protein folding. In Synechocystis sp. (strain ATCC 27184 / PCC 6803 / Kazusa), this protein is Chaperonin GroEL 1.